The following is an 80-amino-acid chain: Large ribosomal subunit protein uL24 (80 aa).

A disordered region spans residues His53–Ser80.

The protein belongs to the universal ribosomal protein uL24 family. Part of the 50S ribosomal subunit.

Its function is as follows. One of two assembly initiator proteins, it binds directly to the 5'-end of the 23S rRNA, where it nucleates assembly of the 50S subunit. One of the proteins that surrounds the polypeptide exit tunnel on the outside of the subunit. The sequence is that of Large ribosomal subunit protein uL24 from Chlorobium limicola (strain DSM 245 / NBRC 103803 / 6330).